A 301-amino-acid polypeptide reads, in one-letter code: Ribosomal RNA large subunit methyltransferase F (301 aa).

It belongs to the methyltransferase superfamily. METTL16/RlmF family.

It is found in the cytoplasm. It carries out the reaction adenosine(1618) in 23S rRNA + S-adenosyl-L-methionine = N(6)-methyladenosine(1618) in 23S rRNA + S-adenosyl-L-homocysteine + H(+). Specifically methylates the adenine in position 1618 of 23S rRNA. This Colwellia psychrerythraea (strain 34H / ATCC BAA-681) (Vibrio psychroerythus) protein is Ribosomal RNA large subunit methyltransferase F.